Here is a 2046-residue protein sequence, read N- to C-terminus: MIRVLGLLWDPLSSWVEVSGPIILFGLYYGFIATLPFGPSKIYSMRSFFLGETLYGIIAISGSITGQLIVFLSMYYSPIYAALWKPHAITLLVIPYTFCRVFRSLEKPSSPESTHPMNSIKNPKILSLFMGGLILQLLNPILLANPVLTRLVNLFLFRYSDNISFMISSFCGWLGGHILFINLTKLVSLRLVSFRIERNSPIDHTSLRRYIHQTFSVLLISYFSFYLGRSPLIFHRKKKDNKKKDRSAAMAKKDRSVAMAKKNCSVAMVKKDRSVAEDEDRSVAMAKKGRSVAEDEDRSEPLAMVMVQEARSVSFIAKKARSVAEDKDPEDEHRSVAMAKKARSVAEDKDPEDEHRSVAMAKKDRSVAEDEDRSVAMAKKDRSVAEDEDRSVAEDEDRSVAEDEDRSVAEDEDRSVAEDEDRSVAEDEDRFVAEDEDRSVAEDEDRSVAEDEDRSVAEDEDPEDEDRSVPREQKKLKGLPISWFKQPCPIKFFDPDRIYQPIRYIGNSPFHCLKPVMRTEVSQYFFGAYSSDGKKRISFTLLPSVLALGEKLGKYRDLLDTSCLSEDPYHRWNHTMKRRRDSLENEFSDRVKALSHGSPAENVIERRVKFSNSQGDSFTEMYDPLLNGALRGTIDQFESPKMLNDLIISIISNLSDFIEIPIKDCKEGFPNDQFGYGYHISEHWQELEHKSFRLPWEPLPTDTFRSLVPSTKSSRRGKVEPISKRLYPLAERIIPNKAKKIFEEYLSNIDSSFGKLIYPKDLLEMQIQEIYTKDDDSLIHFLWLEIAFRVAYMDLAPEIASCNERIYTNSLVNIYNRIDGRNVAPTGTVKWELILSLFTTKQIFLFESLAQHEWTILRNCRGNVSTDDSTQTKDFIDLYGKILLNEPLQFREIKKHLPRWPSDLMRAERDGDGDDRGPIQISTSRIRTRKVKSKLTLDFGKERIVLKRYHAESDYRRSLIRGSMRAKRRKIMIWKRVQPNVHSLFFLRRMEIPTYPKDYYDTFDSGRVNQEQIQKEVREKIHRGKYLDPVLHNTTLAEQVCLAWPEVHYFRGLILVAQSNIRKNIILPSLIIAKNIGRILLFKAPEFAQDWEEMKEELHIKCGSDGTEFSKKGFPDKWYKYGMQIKLIFPFRLKPWHSQSKKRLRLRWSYLTTLGFETDIPFGDPKPKLGIFSEFFQPIFKKVKKGLKKGLKKGLKKGLKRELILFKKVKRRLMGSTGIRRVSRVRYIDKSELNDRIQNKLLSETETTPMGSANDSSEVNDQFGYETQTINVKDPDDWTTTMKERIESIAIINSSPITGMSLMDSEIHTGSKGSFNILGSTLKKRLVQIRRIPGRFRNKSVQLIRKRFYSMKLMKLFLKRMDRYLLLSVIHFIGSNIKFWIRSAWIRSTGNIATIYGRIFIINNDISKINRGKITNYYSINEKRKDFEIRPDRNMLSMSQAYVFHKIWQIGAIDRSYSKYFLKYRAQTSYPLIKKKIKELLDIQRILDHEKPQDLKENDWKQWLRCFDRYKLSPQIWSRINPQKWRNRVNKQCTCYEERFIPYEKKKDYIFATVIEPSLGLLRKMNKRYRYDLLSYSYLNSTKELDILNLTKDSDILNLTKDSDILNLTKDSDILNLTKDSDILNLTKDSDTLKIEKRRSGLDLKFWLFPELSGKENIYDNSKFIPGYSILSEAQERKKIEEKEREERIKVIEERIGIIRSDVQNKKVEEKQTGTGEVEEKQTGKVKQKQFGLKVEDQKTDGKKKTNQVLVQHKILKDIGEEDISDLAGMCRILIEIEDPTKFMQIYEENINLNLMFLIIYEDLKGYEKYINARDSNANDINANDINANDINAKDSNANDINAKDSNANDINANDSNAKDSNANDINAKDINAKDSNANDINAKDSNADVPKKKEDEIPKTVVSSEPYRLSSIVNDNLLIYKIVSMWLKSEKIKRAGLGDDKNILSSFNLEDILLPKRRREFRILNRFDLENDHVGFFNGKSIQNDEELMGRDQHLSVDTTQRIKRFLWPSYRLEDLLCMNRYWFNTNDGSRSAMLRIRMYPLNVN.

Helical transmembrane passes span Val-18–Gly-38, Leu-54–Met-74, Ile-79–Cys-99, Ile-125–Asn-145, Ile-163–Leu-183, and Thr-214–Phe-234. Disordered stretches follow at residues Asp-278 to Ser-299, Ala-320 to Glu-472, and Ala-1833 to Ile-1898. 3 stretches are compositionally biased toward basic and acidic residues: residues Ser-322–Ser-335, Ser-344–Ala-368, and Ala-378–Ala-457. A compositionally biased stretch (low complexity) spans Ala-1833–Ile-1866. Residues Asn-1882–Ile-1898 show a composition bias toward basic and acidic residues.

It belongs to the TIC214 family. As to quaternary structure, part of the Tic complex.

The protein localises to the plastid. Its subcellular location is the chloroplast inner membrane. In terms of biological role, involved in protein precursor import into chloroplasts. May be part of an intermediate translocation complex acting as a protein-conducting channel at the inner envelope. The sequence is that of Protein TIC 214 from Pinus koraiensis (Korean pine).